The primary structure comprises 582 residues: Colicin-E9 (582 aa).

5 disordered regions span residues 1–74, 246–270, 294–321, 422–489, and 510–542; these read MSGG…SGGG, SPGVTNNTDKDVRPAGFTQGGNTRD, PDQVKQRQDEENRRQQEWDATHPVEAAE, ADAA…IADK, and SKDPELSKNLNPSNKSSVSKGYSPFTPKNQQVG. Gly residues predominate over residues 20–35; that stretch reads INGGPTGIGVSGGASD. Residues 36-45 show a composition bias toward low complexity; that stretch reads GSGWSSENNP. Residues 46-74 are compositionally biased toward gly residues; that stretch reads WGGGSGSGIHWGGGSGRGNGGGNGNSGGG. 3 stretches are compositionally biased toward basic and acidic residues: residues 297–321, 430–453, and 465–476; these read VKQRQDEENRRQQEWDATHPVEAAE, QERRKQKENKEKDAKDKLDKESKR, and PVGDKWLDDAGK. Over residues 516-529 the composition is skewed to low complexity; the sequence is SKNLNPSNKSSVSK. 3 residues coordinate Zn(2+): H550, H575, and H579.

Belongs to the colicin/pyosin nuclease family.

Functionally, this plasmid-coded bactericidal protein is an endonuclease active on both single- and double-stranded DNA but with undefined specificity. Its function is as follows. Colicins are polypeptide toxins produced by and active against E.coli and closely related bacteria. The protein is Colicin-E9 (col) of Escherichia coli.